We begin with the raw amino-acid sequence, 301 residues long: Ankyrin repeat domain-containing protein 29 (301 aa).

ANK repeat units follow at residues 11–41 (PLAN…DVDC), 45–74 (HGTT…DINL), 78–107 (SGTT…STEF), 111–140 (DGGT…NIHD), 144–173 (DGAT…KVNQ), 177–206 (DGTA…DRDA), 210–239 (DGTT…TLGI), and 242–271 (NGTS…DPSL).

This chain is Ankyrin repeat domain-containing protein 29 (ANKRD29), found in Homo sapiens (Human).